Here is a 151-residue protein sequence, read N- to C-terminus: Putative truncated GMC-type inactive oxidoreductase L893 (151 aa).

This sequence belongs to the GMC oxidoreductase family.

The protein localises to the virion. This is Putative truncated GMC-type inactive oxidoreductase L893 from Acanthamoeba polyphaga (Amoeba).